Reading from the N-terminus, the 248-residue chain is Coproheme decarboxylase (248 aa).

Residues Arg130, Tyr144, 144–148, Lys148, His171, Gln184, and Ser222 contribute to the Fe-coproporphyrin III site; that span reads YPMDK. Residue Tyr144 is part of the active site.

Belongs to the ChdC family. Type 1 subfamily. In terms of assembly, homopentamer. It depends on Fe-coproporphyrin III as a cofactor.

The catalysed reaction is Fe-coproporphyrin III + 2 H2O2 + 2 H(+) = heme b + 2 CO2 + 4 H2O. It catalyses the reaction Fe-coproporphyrin III + H2O2 + H(+) = harderoheme III + CO2 + 2 H2O. The enzyme catalyses harderoheme III + H2O2 + H(+) = heme b + CO2 + 2 H2O. It participates in porphyrin-containing compound metabolism; protoheme biosynthesis. In terms of biological role, involved in coproporphyrin-dependent heme b biosynthesis. Catalyzes the decarboxylation of Fe-coproporphyrin III (coproheme) to heme b (protoheme IX), the last step of the pathway. The reaction occurs in a stepwise manner with a three-propionate harderoheme intermediate. This chain is Coproheme decarboxylase, found in Geobacillus stearothermophilus (strain DSM 13240 / CIP 106956 / 10).